The following is a 245-amino-acid chain: 5'-nucleotidase SurE (245 aa).

A divalent metal cation is bound by residues Asp8, Asp9, Ser39, and Asn97.

It belongs to the SurE nucleotidase family. A divalent metal cation serves as cofactor.

It localises to the cytoplasm. It catalyses the reaction a ribonucleoside 5'-phosphate + H2O = a ribonucleoside + phosphate. Its function is as follows. Nucleotidase that shows phosphatase activity on nucleoside 5'-monophosphates. The protein is 5'-nucleotidase SurE of Clostridium kluyveri (strain NBRC 12016).